The sequence spans 191 residues: Fe/S biogenesis protein NfuA (191 aa).

[4Fe-4S] cluster contacts are provided by C149 and C152.

It belongs to the NfuA family. In terms of assembly, homodimer. [4Fe-4S] cluster is required as a cofactor.

Its function is as follows. Involved in iron-sulfur cluster biogenesis. Binds a 4Fe-4S cluster, can transfer this cluster to apoproteins, and thereby intervenes in the maturation of Fe/S proteins. Could also act as a scaffold/chaperone for damaged Fe/S proteins. This chain is Fe/S biogenesis protein NfuA, found in Serratia proteamaculans (strain 568).